A 529-amino-acid chain; its full sequence is GMP synthase [glutamine-hydrolyzing] (529 aa).

One can recognise a Glutamine amidotransferase type-1 domain in the interval 16–205 (PVLVVDFGAQ…LHDFAGLDAD (190 aa)). The active-site Nucleophile is the Cys93. Active-site residues include His179 and Glu181. The 198-residue stretch at 206 to 403 (WTAANIAGVL…LDLPEEIVAR (198 aa)) folds into the GMPS ATP-PPase domain. Residue 233–239 (SGGVDSA) coordinates ATP.

Homodimer.

The enzyme catalyses XMP + L-glutamine + ATP + H2O = GMP + L-glutamate + AMP + diphosphate + 2 H(+). It functions in the pathway purine metabolism; GMP biosynthesis; GMP from XMP (L-Gln route): step 1/1. Its function is as follows. Catalyzes the synthesis of GMP from XMP. The polypeptide is GMP synthase [glutamine-hydrolyzing] (Mycobacterium leprae (strain Br4923)).